A 225-amino-acid chain; its full sequence is MAKRKQGIFGRIWFVAWRFLLLFVIVLFLFRFVPLPTTSFMLQSQYPVKHTWISIDKLPTYMPLAVVASEDQRFPDHFGVDFTAISKALDQYDDGDGLRGASTITQQTAKNLFLWSGRSFIRKGLEAGLAIGLETLWGKKRILEVYLNIAEFGKGIYGVEAASQHYFGRSASKLTMNQAARLAVLLPSPRTRNPNDLTFYLRERVDWVERQMQQLGPDYLKPIIE.

The helical transmembrane segment at 12 to 32 (IWFVAWRFLLLFVIVLFLFRF) threads the bilayer.

It belongs to the glycosyltransferase 51 family.

The protein localises to the cell inner membrane. It catalyses the reaction [GlcNAc-(1-&gt;4)-Mur2Ac(oyl-L-Ala-gamma-D-Glu-L-Lys-D-Ala-D-Ala)](n)-di-trans,octa-cis-undecaprenyl diphosphate + beta-D-GlcNAc-(1-&gt;4)-Mur2Ac(oyl-L-Ala-gamma-D-Glu-L-Lys-D-Ala-D-Ala)-di-trans,octa-cis-undecaprenyl diphosphate = [GlcNAc-(1-&gt;4)-Mur2Ac(oyl-L-Ala-gamma-D-Glu-L-Lys-D-Ala-D-Ala)](n+1)-di-trans,octa-cis-undecaprenyl diphosphate + di-trans,octa-cis-undecaprenyl diphosphate + H(+). The protein operates within cell wall biogenesis; peptidoglycan biosynthesis. In terms of biological role, peptidoglycan polymerase that catalyzes glycan chain elongation from lipid-linked precursors. In Marinomonas sp. (strain MWYL1), this protein is Biosynthetic peptidoglycan transglycosylase.